A 485-amino-acid polypeptide reads, in one-letter code: Ribulose bisphosphate carboxylase large chain (485 aa).

Residues Asn-124 and Thr-174 each coordinate substrate. The Proton acceptor role is filled by Lys-176. Lys-178 serves as a coordination point for substrate. Mg(2+)-binding residues include Lys-202, Asp-204, and Glu-205. At Lys-202 the chain carries N6-carboxylysine. The active-site Proton acceptor is His-294. Residues Arg-295, His-327, and Ser-379 each contribute to the substrate site.

Belongs to the RuBisCO large chain family. Type I subfamily. In terms of assembly, heterohexadecamer of 8 large chains and 8 small chains. The cofactor is Mg(2+).

It carries out the reaction 2 (2R)-3-phosphoglycerate + 2 H(+) = D-ribulose 1,5-bisphosphate + CO2 + H2O. The enzyme catalyses D-ribulose 1,5-bisphosphate + O2 = 2-phosphoglycolate + (2R)-3-phosphoglycerate + 2 H(+). RuBisCO catalyzes two reactions: the carboxylation of D-ribulose 1,5-bisphosphate, the primary event in carbon dioxide fixation, as well as the oxidative fragmentation of the pentose substrate. Both reactions occur simultaneously and in competition at the same active site. The chain is Ribulose bisphosphate carboxylase large chain from Rhodopseudomonas palustris (strain TIE-1).